The chain runs to 494 residues: Glycerol kinase (494 aa).

T13 contributes to the ADP binding site. ATP contacts are provided by T13, T14, and S15. T13 lines the sn-glycerol 3-phosphate pocket. Residue R17 coordinates ADP. Sn-glycerol 3-phosphate-binding residues include R83, E84, Y135, and D244. The glycerol site is built by R83, E84, Y135, D244, and Q245. Positions 266 and 309 each coordinate ADP. The ATP site is built by T266, G309, Q313, and G410. 2 residues coordinate ADP: G410 and N414.

Belongs to the FGGY kinase family.

It carries out the reaction glycerol + ATP = sn-glycerol 3-phosphate + ADP + H(+). It participates in polyol metabolism; glycerol degradation via glycerol kinase pathway; sn-glycerol 3-phosphate from glycerol: step 1/1. Its activity is regulated as follows. Inhibited by fructose 1,6-bisphosphate (FBP). Its function is as follows. Key enzyme in the regulation of glycerol uptake and metabolism. Catalyzes the phosphorylation of glycerol to yield sn-glycerol 3-phosphate. This is Glycerol kinase from Shewanella baltica (strain OS195).